The chain runs to 294 residues: MEDSAMDMESMGPLRPQTFLFGCELKAEKEYQFKVDDEENEHQLSLRTVTLGAGAKDELHVVEAEALDYEGNPTKVVLASLKMSVQPTVSLGGFEITPPFVLRLKCGSGPVYVSGQHLVALEEEPESEDEEEDTKIGNASTKRPASGGGAKTPQKKPKLSEDDEDDDEDEDDDEDDEDDLDDDEEEIKTPMKKPAREPAGKNMQKAKQNGKDSKPSTPASKTKTPDSKKDKSLTPKTPKVPLSLEEIKAKMQASVDKGCSLPKLEPKFANYVKNCFRTEDQKVIQALWQWRQTL.

The span at 121 to 133 (LEEEPESEDEEED) shows a compositional bias: acidic residues. The interval 121–244 (LEEEPESEDE…PKTPKVPLSL (124 aa)) is disordered. The short motif at 153 to 158 (PQKKPK) is the Nuclear localization signal element. The segment covering 161–186 (EDDEDDDEDEDDDEDDEDDLDDDEEE) has biased composition (acidic residues). A Nuclear localization signal motif is present at residues 190–196 (PMKKPAR). The segment covering 223–233 (KTPDSKKDKSL) has biased composition (basic and acidic residues).

It belongs to the nucleoplasmin family. Decamer formed by two pentameric rings associated in a head-to-head fashion. In terms of processing, phosphorylated.

It localises to the cytoplasm. Its subcellular location is the nucleus. The protein localises to the nucleoplasm. It is found in the nucleolus. Acts as a chaperonin for the core histones H3, H2B and H4. Associated with nucleolar ribonucleoprotein structures and bind single-stranded nucleic acids. It may function in the assembly and/or transport of ribosome. May stimulate endonuclease activity on apurinic/apyrimidinic (AP) double-stranded DNA. May inhibit endonuclease activity on AP single-stranded RNA. This is Nucleophosmin (NPM1) from Gallus gallus (Chicken).